The primary structure comprises 392 residues: Phosphoglycerate kinase (392 aa).

Substrate contacts are provided by residues 21 to 23, Arg-36, 59 to 62, Arg-118, and Arg-151; these read DFN and HLGR. ATP-binding positions include Lys-202, Glu-321, and 347–350; that span reads GGDS.

This sequence belongs to the phosphoglycerate kinase family. As to quaternary structure, monomer.

It is found in the cytoplasm. It carries out the reaction (2R)-3-phosphoglycerate + ATP = (2R)-3-phospho-glyceroyl phosphate + ADP. It participates in carbohydrate degradation; glycolysis; pyruvate from D-glyceraldehyde 3-phosphate: step 2/5. The chain is Phosphoglycerate kinase from Symbiobacterium thermophilum (strain DSM 24528 / JCM 14929 / IAM 14863 / T).